A 91-amino-acid chain; its full sequence is Alpha-elapitoxin-Oh2b (91 aa).

The first 21 residues, 1-21 (MKTLLLTLVVMTIVCLDLGYT), serve as a signal peptide directing secretion. 5 disulfide bridges follow: C24–C41, C34–C62, C47–C51, C66–C77, and C78–C83.

It belongs to the three-finger toxin family. Long-chain subfamily. Type II alpha-neurotoxin sub-subfamily. In terms of assembly, monomer. Expressed by the venom gland.

Its subcellular location is the secreted. In terms of biological role, binds with high affinity to muscular (alpha-1/CHRNA1) and neuronal (alpha-7/CHRNA7) nicotinic acetylcholine receptor (nAChR) and inhibits acetylcholine from binding to the receptor, thereby impairing neuromuscular and neuronal transmission. Recombinant LNTX1 leads to a functional block of the muscle-type acetylcholine receptors. Has a cytotoxic activity. This neurotoxin is lethal. The chain is Alpha-elapitoxin-Oh2b from Ophiophagus hannah (King cobra).